The chain runs to 874 residues: Cap-specific mRNA (nucleoside-2'-O-)-methyltransferase 1A (874 aa).

Over residues 1–10 the composition is skewed to basic and acidic residues; that stretch reads MSERGDDDRT. The disordered stretch occupies residues 1 to 64; the sequence is MSERGDDDRT…APPTKQKTKA (64 aa). The G-patch domain maps to 60–106; it reads QKTKAEEMMERMGYKAGEGLGKNKQGIQEPVALSTQRGKTGLGHEGA. Residues 211–440 enclose the RrmJ-type SAM-dependent 2'-O-MTase domain; the sequence is FFQNRAAMKT…ERYITCKGLR (230 aa). S-adenosyl-L-methionine contacts are provided by G273 and D354. K394 serves as the catalytic Proton acceptor. Residues 535-555 form a disordered region; the sequence is PNKQRPRGGDRGSRNGNQERL.

The enzyme catalyses a 5'-end (N(7)-methyl 5'-triphosphoguanosine)-ribonucleoside in mRNA + S-adenosyl-L-methionine = a 5'-end (N(7)-methyl 5'-triphosphoguanosine)-(2'-O-methyl-ribonucleoside) in mRNA + S-adenosyl-L-homocysteine + H(+). In terms of biological role, S-adenosyl-L-methionine-dependent methyltransferase that mediates mRNA cap1 2'-O-ribose methylation to the 5'-cap structure of mRNAs. Methylates the ribose of the first nucleotide of a m(7)GpppG-capped mRNA to produce m(7)GpppNmp (cap1). Cap1 modification is linked to higher levels of translation. The chain is Cap-specific mRNA (nucleoside-2'-O-)-methyltransferase 1A from Caenorhabditis briggsae.